We begin with the raw amino-acid sequence, 177 residues long: Large ribosomal subunit protein uL6 (177 aa).

The protein belongs to the universal ribosomal protein uL6 family. As to quaternary structure, part of the 50S ribosomal subunit.

Its function is as follows. This protein binds to the 23S rRNA, and is important in its secondary structure. It is located near the subunit interface in the base of the L7/L12 stalk, and near the tRNA binding site of the peptidyltransferase center. This is Large ribosomal subunit protein uL6 from Saccharophagus degradans (strain 2-40 / ATCC 43961 / DSM 17024).